The sequence spans 396 residues: MSKLNAYFGEYGGQFVPQILVPALDQLEHEFIKAQADESFKQEFKELLQEYAGRPTALTKTRNIVKNTKTKLYLKREDLLHGGAHKTNQVLGQALLAKRMGKKEIIAETGAGQHGVATALACALLDLKCRVYMGAKDVERQSPNVFRMKLMGAEVIPVHSGSATLKDACNEALRDWSANYNKAHYLLGTAAGPHPFPTIVREFQRMIGEETKQQILAKEGKLPDAVIACVGGGSNAIGMFADFIDETSVQLIGVEPAGKGIETGEHGAPLKHGKTGIFFGMKAPLMQNSDGQIEESYSISAGLDFPSVGPQHAHLLAIGRAEYASATDNEALDAFKLLCKKEGIIPALESSHALAYALKLAYENPDKEQLLVVNLSGRGDKDIFTVHDILKEKGEM.

K86 carries the post-translational modification N6-(pyridoxal phosphate)lysine.

It belongs to the TrpB family. Tetramer of two alpha and two beta chains. The cofactor is pyridoxal 5'-phosphate.

The catalysed reaction is (1S,2R)-1-C-(indol-3-yl)glycerol 3-phosphate + L-serine = D-glyceraldehyde 3-phosphate + L-tryptophan + H2O. It participates in amino-acid biosynthesis; L-tryptophan biosynthesis; L-tryptophan from chorismate: step 5/5. Its function is as follows. The beta subunit is responsible for the synthesis of L-tryptophan from indole and L-serine. This Francisella philomiragia subsp. philomiragia (strain ATCC 25017 / CCUG 19701 / FSC 153 / O#319-036) protein is Tryptophan synthase beta chain.